Reading from the N-terminus, the 360-residue chain is Peptide chain release factor 1 (360 aa).

Residue Gln-235 is modified to N5-methylglutamine.

This sequence belongs to the prokaryotic/mitochondrial release factor family. In terms of processing, methylated by PrmC. Methylation increases the termination efficiency of RF1.

It localises to the cytoplasm. In terms of biological role, peptide chain release factor 1 directs the termination of translation in response to the peptide chain termination codons UAG and UAA. The protein is Peptide chain release factor 1 of Burkholderia thailandensis (strain ATCC 700388 / DSM 13276 / CCUG 48851 / CIP 106301 / E264).